Reading from the N-terminus, the 464-residue chain is Light-independent protochlorophyllide reductase subunit N (464 aa).

[4Fe-4S] cluster contacts are provided by cysteine 29, cysteine 54, and cysteine 114.

This sequence belongs to the BchN/ChlN family. In terms of assembly, protochlorophyllide reductase is composed of three subunits; ChlL, ChlN and ChlB. Forms a heterotetramer of two ChlB and two ChlN subunits. The cofactor is [4Fe-4S] cluster.

The protein localises to the plastid. It is found in the chloroplast. The catalysed reaction is chlorophyllide a + oxidized 2[4Fe-4S]-[ferredoxin] + 2 ADP + 2 phosphate = protochlorophyllide a + reduced 2[4Fe-4S]-[ferredoxin] + 2 ATP + 2 H2O. Its pathway is porphyrin-containing compound metabolism; chlorophyll biosynthesis (light-independent). Functionally, component of the dark-operative protochlorophyllide reductase (DPOR) that uses Mg-ATP and reduced ferredoxin to reduce ring D of protochlorophyllide (Pchlide) to form chlorophyllide a (Chlide). This reaction is light-independent. The NB-protein (ChlN-ChlB) is the catalytic component of the complex. The protein is Light-independent protochlorophyllide reductase subunit N of Stigeoclonium helveticum (Green alga).